A 329-amino-acid polypeptide reads, in one-letter code: Malate dehydrogenase (329 aa).

12 to 18 (GAAGQIG) contacts NAD(+). Residues R93 and R99 each coordinate substrate. Residues N106, Q113, and 130–132 (TGN) contribute to the NAD(+) site. Substrate contacts are provided by N132 and R163. The active-site Proton acceptor is H188.

This sequence belongs to the LDH/MDH superfamily. MDH type 2 family.

It catalyses the reaction (S)-malate + NAD(+) = oxaloacetate + NADH + H(+). In terms of biological role, catalyzes the reversible oxidation of malate to oxaloacetate. This Mycobacterium ulcerans (strain Agy99) protein is Malate dehydrogenase.